The following is a 186-amino-acid chain: Adenine phosphoribosyltransferase (186 aa).

Residue 132 to 136 (ATGGS) participates in AMP binding.

Belongs to the purine/pyrimidine phosphoribosyltransferase family. As to quaternary structure, homodimer. Mg(2+) serves as cofactor.

It localises to the cytoplasm. The protein localises to the nucleus. It catalyses the reaction AMP + diphosphate = 5-phospho-alpha-D-ribose 1-diphosphate + adenine. It participates in purine metabolism; AMP biosynthesis via salvage pathway; AMP from adenine: step 1/1. In terms of biological role, catalyzes a salvage reaction resulting in the formation of AMP, that is energically less costly than de novo synthesis. In Debaryomyces hansenii (strain ATCC 36239 / CBS 767 / BCRC 21394 / JCM 1990 / NBRC 0083 / IGC 2968) (Yeast), this protein is Adenine phosphoribosyltransferase (APT1).